Here is a 2348-residue protein sequence, read N- to C-terminus: Transcription factor HIVEP3 (2348 aa).

Positions 1 to 105 are disordered; that stretch reads MDPDQSIKGT…AFMSPGKPEH (105 aa). Positions 27-72 are enriched in polar residues; it reads IQTSVSSSAPYPGSGTTAPSESATQELLATQPFSGPSQEKTGQQQK. 2 consecutive C2H2-type zinc fingers follow at residues 185-207 and 213-235; these read YICQYCSRPCAKPSVLQKHIRSH and YPCGPCGFSFKTKSNLYKHRKSH. The interval 185 to 235 is ZAS1; sequence YICQYCSRPCAKPSVLQKHIRSHTGERPYPCGPCGFSFKTKSNLYKHRKSH. The interval 204–1055 is no DNA binding activity or transactivation activity, but complete prevention of TRAF-dependent NF-Kappa-B activation; associates with TRAF2 and JUN; sequence IRSHTGERPY…KGKQESSEEP (852 aa). Disordered regions lie at residues 239-401, 475-532, and 561-628; these read IKAG…SPPN, DSVK…PLLR, and ADPE…TKKG. The segment at 257 to 280 is acidic 1; sequence EMERIPGEEFEEPTEGESTDSEEE. A compositionally biased stretch (acidic residues) spans 264-281; sequence EEFEEPTEGESTDSEEET. The segment covering 298–323 has biased composition (low complexity); that stretch reads PLLSSSLYSSGSHGSSQERCSLSQSS. Basic and acidic residues predominate over residues 338–352; that stretch reads SSEHPLSHKPEDTHT. Polar residues-rich tracts occupy residues 372-401 and 485-495; these read TFLSPGSKGSTESGYFSRSESAEQQVSPPN and TRRSSVESPKS. Low complexity-rich tracts occupy residues 513 to 527 and 589 to 605; these read QSLLSLQHPPSSTHP and PLGGEYSSEEPGPSSKD. The span at 606–623 shows a compositional bias: basic and acidic residues; sequence PTSKPSDEPEPKESDLTK. The CCHC HIVEP-type zinc finger occupies 633 to 663; the sequence is GANYECTICGARYKKRDNYEAHKKYYCSELQ. Disordered stretches follow at residues 692–1098, 1229–1274, 1386–1427, 1441–1555, and 1654–1694; these read KLGA…PPYT, LPPV…TSAP, EGCS…KADE, STED…EGTD, and EVHL…GEPA. Residues 736-749 show a composition bias toward low complexity; it reads STKSPAEASKSAPS. The tract at residues 844-865 is acidic 2; the sequence is EEPDRPDTEPEPPPKEPEKTEE. Over residues 845-865 the composition is skewed to basic and acidic residues; that stretch reads EPDRPDTEPEPPPKEPEKTEE. A Nuclear localization signal motif is present at residues 885 to 891; it reads PKKKRLR. Residues 893-929 are compositionally biased toward low complexity; it reads AEMAQSSGESSFESSVPLSRSPSQESSISLSGSSRSA. Positions 930–939 are enriched in basic and acidic residues; sequence SFDREDHGKA. 3 stretches are compositionally biased toward polar residues: residues 975 to 985, 1062 to 1073, and 1247 to 1256; these read SEQSPNVPHSS, TKSSVPQISVGT, and SSSTEYSSDI. Residues 1409-1433 adopt a coiled-coil conformation; sequence METQQQKRVKEEEASKADEKLELVS. Basic and acidic residues-rich tracts occupy residues 1416–1427, 1442–1452, and 1518–1527; these read RVKEEEASKADE, TEDRKKTEKPH, and VKKEDPKEQT. The span at 1538 to 1547 shows a compositional bias: low complexity; it reads LPLSDTSPKP. Residues 1665–1694 are compositionally biased toward basic and acidic residues; it reads SQKDPARVEKEEKQGKAEEGTPTSKRGEPA. C2H2-type zinc fingers lie at residues 1720–1742 and 1748–1772; these read YVCEECGIRCKKPSMLKKHIRTH and YVCKHCHFAFKTKGNLTKHMKSKAH. Positions 1720–1772 are ZAS2; it reads YVCEECGIRCKKPSMLKKHIRTHTDVRPYVCKHCHFAFKTKGNLTKHMKSKAH. The tract at residues 1783 to 1841 is acidic 3; that stretch reads EELEAEEGTSDDLHQDSEGQEGAEAVEEHQFSDLEDSDSDSDLDEDEEEEEEEEESQDE. Disordered stretches follow at residues 1786-1990 and 2009-2038; these read EAEE…HLCG and PAGLERATDTGTPRYSPTRRWSLGQAESPP. Residues 1815 to 1840 show a composition bias toward acidic residues; the sequence is DLEDSDSDSDLDEDEEEEEEEEESQD. Over residues 1871–1902 the composition is skewed to polar residues; it reads PDSTSDEVPQGSSISEATHLTASSCSTPSRGT. Tandem repeats lie at residues 1897–1900, 1927–1930, 1933–1936, 1961–1964, and 2024–2027. The segment covering 1952 to 1961 has biased composition (polar residues); the sequence is KNDSSPQQCS. The tract at residues 2053–2148 is 5 X 4 AA tandem repeats of [ST]-P-X-[RK]; the sequence is SPSADKSGLG…QLLSRAPCPL (96 aa). 2 disordered regions span residues 2184–2265 and 2284–2348; these read SDLT…QGHQ and KASS…PPSI. Residues 2203–2216 show a composition bias toward low complexity; that stretch reads SPSASVSPVAKVSK. Over residues 2293 to 2314 the composition is skewed to polar residues; that stretch reads RSSSMDCLAETSTYSPPRSRNL.

Interacts with TRAF1 and TRAF2 as well as with JUN. Forms a multimeric complex with RUNX2 and E3 ubiquitin ligase WWP1. Post-translationally, phosphorylated on threonine and serine residues. Phosphorylation by cyclin-dependent kinase CDK1 decreases HIVEP3 DNA binding affinity, and by epidermal growth factor receptor kinase increases its DNA binding affinity. As to expression, expressed in macrophages, lymphocytes, brain, thymus, spleen and bone marrow. Expressed in osteoblasts, whole bone and, to a lesser extent, in osteoclasts.

Its subcellular location is the cytoplasm. It localises to the nucleus. Its function is as follows. Plays a role of transcription factor; binds to recognition signal sequences (Rss heptamer) for somatic recombination of immunoglobulin and T-cell receptor gene segments; Also binds to the kappa-B motif of gene such as S100A4, involved in cell progression and differentiation. Kappa-B motif is a gene regulatory element found in promoters and enhancers of genes involved in immunity, inflammation, and growth and that responds to viral antigens, mitogens, and cytokines. Involvement of HIVEP3 in cell growth is strengthened by the fact that its down-regulation promotes cell cycle progression with ultimate formation of multinucleated giant cells. Strongly inhibits TNF-alpha-induced NF-kappa-B activation; Interferes with nuclear factor NF-kappa-B by several mechanisms: as transcription factor, by competing for Kappa-B motif and by repressing transcription in the nucleus; through a non transcriptional process, by inhibiting nuclear translocation of RELA by association with TRAF2, an adapter molecule in the tumor necrosis factor signaling, which blocks the formation of IKK complex. Interaction with TRAF proteins inhibits both NF-Kappa-B-mediated and c-Jun N-terminal kinase/JNK-mediated responses that include apoptosis and pro-inflammatory cytokine gene expression. Positively regulates the expression of IL2 in T-cell. Essential regulator of adult bone formation. The protein is Transcription factor HIVEP3 (Hivep3) of Mus musculus (Mouse).